A 289-amino-acid polypeptide reads, in one-letter code: Protease HtpX (289 aa).

Transmembrane regions (helical) follow at residues 5-25 (IVLFAITNIAVLILASIVMSL) and 33-53 (MSGLLVMALILGFGGSLISLL). Histidine 140 contributes to the Zn(2+) binding site. Residue glutamate 141 is part of the active site. Histidine 144 provides a ligand contact to Zn(2+). 2 helical membrane passes run 155-175 (LLQGVLNTFVIVLARVVGGFI) and 193-213 (GIVLVLELLFGLFATIITMWF). Glutamate 218 lines the Zn(2+) pocket.

Belongs to the peptidase M48B family. Requires Zn(2+) as cofactor.

It is found in the cell inner membrane. In Xylella fastidiosa (strain M23), this protein is Protease HtpX.